The following is an 838-amino-acid chain: Probable bifunctional folylpolyglutamate synthase/dihydropteroate synthase (838 aa).

Residues 1–418 (MEYHEAVNFL…LVVGSLYVVA (418 aa)) are folylpolyglutamate synthase. Position 46–52 (46–52 (GSNGKGS)) interacts with ATP. Positions 541–561 (AADAGEDDERGAGDASDAGHD) are disordered. Residues 569–819 (TAVMGILNVT…DVPENVAAVN (251 aa)) enclose the Pterin-binding domain. The interval 571-838 (VMGILNVTPN…RFEADAERED (268 aa)) is DHPS. Asparagine 576 contacts Mg(2+). (7,8-dihydropterin-6-yl)methyl diphosphate contacts are provided by residues threonine 616, aspartate 649, asparagine 668, aspartate 738, lysine 774, and 807-809 (RVH).

In the N-terminal section; belongs to the folylpolyglutamate synthase family. The protein in the C-terminal section; belongs to the DHPS family. Mg(2+) serves as cofactor.

It carries out the reaction (6S)-5,6,7,8-tetrahydrofolyl-(gamma-L-Glu)(n) + L-glutamate + ATP = (6S)-5,6,7,8-tetrahydrofolyl-(gamma-L-Glu)(n+1) + ADP + phosphate + H(+). The catalysed reaction is (7,8-dihydropterin-6-yl)methyl diphosphate + 4-aminobenzoate = 7,8-dihydropteroate + diphosphate. Its pathway is cofactor biosynthesis; tetrahydrofolylpolyglutamate biosynthesis. It participates in cofactor biosynthesis; tetrahydrofolate biosynthesis; 7,8-dihydrofolate from 2-amino-4-hydroxy-6-hydroxymethyl-7,8-dihydropteridine diphosphate and 4-aminobenzoate: step 1/2. Can complement an H.volcanii mutant strain that is thymidine auxotroph because it lacks the two dihydrofolate reductase genes encoded by hdrA and hdrB. The sequence is that of Probable bifunctional folylpolyglutamate synthase/dihydropteroate synthase (folCP) from Haloferax volcanii (strain ATCC 29605 / DSM 3757 / JCM 8879 / NBRC 14742 / NCIMB 2012 / VKM B-1768 / DS2) (Halobacterium volcanii).